The sequence spans 242 residues: ATP synthase subunit a (242 aa).

The next 6 membrane-spanning stretches (helical) occupy residues Ser29–Val49, Val83–Met103, Ile114–Tyr134, Phe140–Ile160, Val181–Phe201, and Ile206–Ile226.

This sequence belongs to the ATPase A chain family. F-type ATPases have 2 components, CF(1) - the catalytic core - and CF(0) - the membrane proton channel. CF(1) has five subunits: alpha(3), beta(3), gamma(1), delta(1), epsilon(1). CF(0) has three main subunits: a(1), b(2) and c(9-12). The alpha and beta chains form an alternating ring which encloses part of the gamma chain. CF(1) is attached to CF(0) by a central stalk formed by the gamma and epsilon chains, while a peripheral stalk is formed by the delta and b chains.

It localises to the cell inner membrane. Key component of the proton channel; it plays a direct role in the translocation of protons across the membrane. The sequence is that of ATP synthase subunit a from Orientia tsutsugamushi (strain Boryong) (Rickettsia tsutsugamushi).